We begin with the raw amino-acid sequence, 764 residues long: Protein FAR1-RELATED SEQUENCE 7 (764 aa).

Residues 42–118 enclose the FAR1 1 domain; that stretch reads DYYNSYATRT…QKEHNHDLGG (77 aa). The disordered stretch occupies residues 119–144; the sequence is HIEEAQTTPRPSVQQRAPAPTKLGIS. Over residues 123–133 the composition is skewed to polar residues; sequence AQTTPRPSVQQ. The 77-residue stretch at 204 to 280 folds into the FAR1 2 domain; that stretch reads QFYQAYAEVV…NKDHNHDLEP (77 aa). The MULE domain occupies 375-471; that stretch reads AVVFDTSYRK…SAWQIRSKER (97 aa). The SWIM-type zinc-finger motif lies at 650–686; the sequence is HAVTFSASNLNASCSCQMFEYEGLLCRHILKVFNLLD.

Belongs to the FHY3/FAR1 family. In terms of tissue distribution, expressed in hypocotyls, rosette and cauline leaves, inflorescences stems, flowers and siliques.

It is found in the nucleus. In terms of biological role, putative transcription activator involved in regulating light control of development. The chain is Protein FAR1-RELATED SEQUENCE 7 (FRS7) from Arabidopsis thaliana (Mouse-ear cress).